The sequence spans 756 residues: 3-O-alpha-D-glucosyl-L-rhamnose phosphorylase (756 aa).

358–359 (WD) contributes to the substrate binding site. The active-site Proton donor is glutamate 486. A substrate-binding site is contributed by 590 to 591 (KQ).

This sequence belongs to the glycosyl hydrolase 65 family. As to quaternary structure, monomer.

The protein resides in the cytoplasm. It catalyses the reaction 3-O-alpha-D-glucosyl-L-rhamnose + phosphate = beta-D-glucose 1-phosphate + L-rhamnopyranose. Functionally, phosphorylase showing strict alpha-1,3-regioselectivity and producing 3-O-alpha-D-glucopyranosyl-L-rhamnopyranose. Specific for L-rhamnose as acceptor and beta-D-glucose 1-phosphate as donor. Does not phosphorylate alpha,alpha-trehalose, kojibiose, nigerose, or maltose. The protein is 3-O-alpha-D-glucosyl-L-rhamnose phosphorylase of Lachnoclostridium phytofermentans (strain ATCC 700394 / DSM 18823 / ISDg) (Clostridium phytofermentans).